The sequence spans 287 residues: Ciliary microtubule inner protein 6 (287 aa).

Composition is skewed to basic and acidic residues over residues 1–15 (MEEK…KIED) and 25–34 (EEIKHEEKPG). Positions 1-42 (MEEKEDKHQQHKIEDAAITYVSENEEIKHEEKPGKSIHHSKS) are disordered. The interval 128 to 160 (GIVPLASPGTSAELQNNFIEYISFIHQYDARKT) is mn 1. Positions 179-287 (KPGSRPTVPK…PLNPPIKKSE (109 aa)) are disordered. 2 stretches are compositionally biased toward basic and acidic residues: residues 203–212 (EQSKKTEKGN) and 232–245 (LEPK…DVRQ). The segment at 213 to 246 (SAESRMISPGLCQQNSQELLEPKTHLSETDVRQA) is mn 2.

Its subcellular location is the cell projection. The protein resides in the cilium. The protein is Ciliary microtubule inner protein 6 of Homo sapiens (Human).